The following is a 465-amino-acid chain: Ribulose bisphosphate carboxylase large chain (465 aa).

Lys4 bears the N6,N6,N6-trimethyllysine mark. Residue Thr163 coordinates substrate. Catalysis depends on Lys165, which acts as the Proton acceptor. Lys167 lines the substrate pocket. Residues Lys191, Asp193, and Glu194 each contribute to the Mg(2+) site. The residue at position 191 (Lys191) is an N6-carboxylysine. The Proton acceptor role is filled by His284. 3 residues coordinate substrate: Arg285, His317, and Ser369.

The protein belongs to the RuBisCO large chain family. Type I subfamily. In terms of assembly, heterohexadecamer of 8 large chains and 8 small chains; disulfide-linked. The disulfide link is formed within the large subunit homodimers. It depends on Mg(2+) as a cofactor. Post-translationally, the disulfide bond which can form in the large chain dimeric partners within the hexadecamer appears to be associated with oxidative stress and protein turnover.

It localises to the plastid. Its subcellular location is the chloroplast. The catalysed reaction is 2 (2R)-3-phosphoglycerate + 2 H(+) = D-ribulose 1,5-bisphosphate + CO2 + H2O. It catalyses the reaction D-ribulose 1,5-bisphosphate + O2 = 2-phosphoglycolate + (2R)-3-phosphoglycerate + 2 H(+). RuBisCO catalyzes two reactions: the carboxylation of D-ribulose 1,5-bisphosphate, the primary event in carbon dioxide fixation, as well as the oxidative fragmentation of the pentose substrate in the photorespiration process. Both reactions occur simultaneously and in competition at the same active site. This chain is Ribulose bisphosphate carboxylase large chain, found in Trochodendron aralioides (Wheel tree).